The chain runs to 362 residues: Major capsid protein VP1 (362 aa).

The segment at 1 to 21 (MAPTKRKGSCPGAAPKKPKEP) is disordered. Positions 5–19 (KRKGSCPGAAPKKPK) match the Bipartite nuclear localization signal motif. The tract at residues 302–362 (ISFLLSDLIN…EFGQTTTRMQ (61 aa)) is C-terminal arm. Position 338 is a phosphothreonine; by host (threonine 338).

It belongs to the polyomaviruses coat protein VP1 family. As to quaternary structure, homomultimer; disulfide-linked. The virus capsid is composed of 72 icosahedral units, each one composed of five disulfide-linked copies of VP1. Interacts with agnoprotein. Interacts with minor capsid proteins VP2 and VP3. Interacts with host HSPA8; this interaction probably participates in virus assembly. Interacts with host SP1; this interaction enhances the efficiency of viral packaging.

It is found in the virion. It localises to the host nucleus. The protein localises to the host endoplasmic reticulum. Forms an icosahedral capsid with a T=7 symmetry and a 40 nm diameter. The capsid is composed of 72 pentamers linked to each other by disulfide bonds and associated with VP2 or VP3 proteins. Binds to N-glycolylneuraminic analog of the ganglioside GM1 on the cell surface to provide virion attachment to target cell. Once attached, the virion is internalized by caveolin-mediated endocytosis and traffics to the endoplasmic reticulum. Inside the endoplasmic reticulum, the protein folding machinery isomerizes VP1 interpentamer disulfide bonds, thereby triggering initial uncoating. Next, the virion uses the endoplasmic reticulum-associated degradation machinery to probably translocate in the cytosol before reaching the nucleus. Nuclear entry of the viral DNA involves the selective exposure and importin recognition of VP2/Vp3 nuclear localization signal. The assembly takes place in the cell nucleus. Encapsulates the genomic DNA and participates in rearranging nucleosomes around the viral DNA. The viral progenies exit the cells by lytic release. This Macaca (macaques) protein is Major capsid protein VP1.